Here is a 176-residue protein sequence, read N- to C-terminus: ATP-dependent protease subunit HslV (176 aa).

Thr5 is a catalytic residue. The Na(+) site is built by Ser161, Cys164, and Thr167.

The protein belongs to the peptidase T1B family. HslV subfamily. A double ring-shaped homohexamer of HslV is capped on each side by a ring-shaped HslU homohexamer. The assembly of the HslU/HslV complex is dependent on binding of ATP.

The protein localises to the cytoplasm. The enzyme catalyses ATP-dependent cleavage of peptide bonds with broad specificity.. Allosterically activated by HslU binding. Its function is as follows. Protease subunit of a proteasome-like degradation complex believed to be a general protein degrading machinery. The protein is ATP-dependent protease subunit HslV of Thermoanaerobacter sp. (strain X514).